Consider the following 763-residue polypeptide: MEKITEKILLEKSSTKTNKLDQIKTLNLSRMSLKSEDLPVPLLSKLCRLEKLDLSGNMLQKIPKGLRLPCLKILNCSNNDMEDVLSLEALTNLEELRLEDNLYLTVNDEHKVIFLLPNLRMFNGKDISSTAHHIRHGSTEILRKRVIGVWERDFSLPDPISAKSLAAVEKSFVNAACTQVKYGPNSLSDYTKWRVEKIAKEYLKSLTSSEEEERVADTTPTKENKTKACDVGGNSITSPQKRTRNNTDVVAEASPRKSSRLVSAAPVEASPRKSARVLNTPQKTQPVVSSPRKHARLTSAETPESSPRKSSRLENVTQKAASQTESPRKPGMSTPTSKQAKCESPRKQSKQSTAKMEKSTPRKTTKAKLQVPQEPVSLTPLHVLQCHSRQNDPDDFSTQLWACAFEPQQDDSIDISGGSQTIATCGGETLCVINCESGLVLKKYKVPGEDFFSLAWSTVLMSRTGGSARPCNILAAGGKRGCVKLIHPRVNLAFGEFRVSRRAISIMRFNPRKPTFLFTGTYDKKIFLWDIGGLDQDYNFKISKLLTLETSSTPLHLALLPSSPDTHLLSGCDEGLYCFDVQLSKNTLKRNEEIEIVFPIYKKNDKKNNYRTIDGLSFLSDDVVASKSHMQGSIYLWSWSATRASWNSRKKEVPAVILAELQWSSTDIPYLSLGTCPGYGYVVCGDEQGRLWMYHITDTMMENFKSGKTISATEVLQWPSPIRAGKGALEGPSINSTAMDPGLHYLVALTDKNMVVVWKRESH.

4 LRR repeats span residues 22–43 (QIKT…VPLL), 48–69 (RLEK…LRLP), 70–91 (CLKI…EALT), and 92–113 (NLEE…HKVI). The interval 206–372 (LTSSEEEERV…KTTKAKLQVP (167 aa)) is disordered. Ser-270 carries the post-translational modification Phosphoserine. Residues 277–288 (VLNTPQKTQPVV) show a composition bias toward polar residues. Residue Thr-280 is modified to Phosphothreonine. Ser-290 carries the phosphoserine modification. Residues 313–325 (LENVTQKAASQTE) show a composition bias toward polar residues. WD repeat units follow at residues 499-539 (VSRR…QDYN), 608-647 (NNYR…ASWN), 653-704 (VPAV…MENF), and 729-763 (LEGP…RESH).

The protein belongs to the LRWD1 family. In terms of assembly, component of the ORC complex.

It is found in the nucleus. It localises to the chromosome. The protein localises to the centromere. Its subcellular location is the telomere. The protein resides in the cytoplasm. It is found in the cytoskeleton. It localises to the microtubule organizing center. The protein localises to the centrosome. Its subcellular location is the kinetochore. Required for G1/S transition. Recruits and stabilizes the origin recognition complex (ORC) onto chromatin during G1 to establish pre-replication complex (preRC) and to heterochromatic sites in post-replicated cells. Binds a combination of DNA and histone methylation repressive marks on heterochromatin. Required for silencing of major satellite repeats. May be important ORC2, ORC3 and ORC4 stability. This chain is Leucine-rich repeat and WD repeat-containing protein 1 (lrwd1), found in Danio rerio (Zebrafish).